The primary structure comprises 344 residues: Phenylalanine--tRNA ligase alpha subunit (344 aa).

Residue glutamate 261 participates in Mg(2+) binding.

This sequence belongs to the class-II aminoacyl-tRNA synthetase family. Phe-tRNA synthetase alpha subunit type 1 subfamily. As to quaternary structure, tetramer of two alpha and two beta subunits. Mg(2+) is required as a cofactor.

The protein localises to the cytoplasm. The catalysed reaction is tRNA(Phe) + L-phenylalanine + ATP = L-phenylalanyl-tRNA(Phe) + AMP + diphosphate + H(+). In Ehrlichia ruminantium (strain Gardel), this protein is Phenylalanine--tRNA ligase alpha subunit.